The chain runs to 670 residues: Acetyl-coenzyme A synthetase (670 aa).

CoA contacts are provided by residues 205-208 and threonine 326; that span reads RRGK. ATP is bound by residues 402–404, 426–431, aspartate 517, arginine 532, and arginine 543; these read GEP and STWWMT. Valine 554, histidine 556, and valine 559 together coordinate Mg(2+). Arginine 601 is a binding site for CoA. Residue lysine 626 is modified to N6-acetyllysine.

Belongs to the ATP-dependent AMP-binding enzyme family. The cofactor is Mg(2+). Post-translationally, acetylated. Deacetylation by the SIR2-homolog deacetylase activates the enzyme.

It catalyses the reaction acetate + ATP + CoA = acetyl-CoA + AMP + diphosphate. In terms of biological role, catalyzes the conversion of acetate into acetyl-CoA (AcCoA), an essential intermediate at the junction of anabolic and catabolic pathways. AcsA undergoes a two-step reaction. In the first half reaction, AcsA combines acetate with ATP to form acetyl-adenylate (AcAMP) intermediate. In the second half reaction, it can then transfer the acetyl group from AcAMP to the sulfhydryl group of CoA, forming the product AcCoA. The polypeptide is Acetyl-coenzyme A synthetase (Pyrobaculum arsenaticum (strain DSM 13514 / JCM 11321 / PZ6)).